The sequence spans 302 residues: tRNA-cytidine(32) 2-sulfurtransferase (302 aa).

Residues 44–49 (SGGKDS) carry the PP-loop motif motif. [4Fe-4S] cluster contacts are provided by cysteine 119, cysteine 122, and cysteine 210.

It belongs to the TtcA family. Homodimer. Requires Mg(2+) as cofactor. [4Fe-4S] cluster serves as cofactor.

It localises to the cytoplasm. The enzyme catalyses cytidine(32) in tRNA + S-sulfanyl-L-cysteinyl-[cysteine desulfurase] + AH2 + ATP = 2-thiocytidine(32) in tRNA + L-cysteinyl-[cysteine desulfurase] + A + AMP + diphosphate + H(+). It participates in tRNA modification. Its function is as follows. Catalyzes the ATP-dependent 2-thiolation of cytidine in position 32 of tRNA, to form 2-thiocytidine (s(2)C32). The sulfur atoms are provided by the cysteine/cysteine desulfurase (IscS) system. The polypeptide is tRNA-cytidine(32) 2-sulfurtransferase (Teredinibacter turnerae (strain ATCC 39867 / T7901)).